A 400-amino-acid polypeptide reads, in one-letter code: MIIKPRVRGFICVTTHPVGCEANVKEQIDYVTSHGPIANGPKKVLVIGASTGYGLAARISAAFGSGADTLGVFFERAGSETKPGTAGWYNSAAFEKFAAEKGLYARSINGDAFSDKVKQVTIDTIKQDLGKVDLVVYSLAAPRRTHPKTGETISSTLKPVGKAVTFRGLDTDKEVIREVSLEPATQEEIDGTVAVMGGEDWQMWIDALDEAGVLADGAKTTAFTYLGEQITHDIYWNGSIGEAKKDLDKKVLSIRDKLAAHGGDARVSVLKAVVTQASSAIPMMPLYLSLLFKVMKEQGTHEGCIEQVYGLLKDSLYGATPHVDEEGRLRADYKELDPQVQGKVVAMWDKVTNENLYEMTDFAGYKTEFLRLFGFEIAGVDYDADVNPDVKIPGIIDTTV.

NAD(+) is bound by residues 48–53 (GASTGY), 74–75 (FE), 111–112 (DA), and 139–140 (LA). Tyr225 is a binding site for substrate. Tyr235 serves as the catalytic Proton donor. Residues Lys244 and 273 to 275 (VVT) contribute to the NAD(+) site.

Belongs to the TER reductase family. Monomer.

It catalyses the reaction a 2,3-saturated acyl-[ACP] + NAD(+) = a (2E)-enoyl-[ACP] + NADH + H(+). The protein operates within lipid metabolism; fatty acid biosynthesis. Involved in the final reduction of the elongation cycle of fatty acid synthesis (FAS II). Catalyzes the reduction of a carbon-carbon double bond in an enoyl moiety that is covalently linked to an acyl carrier protein (ACP). This is Enoyl-[acyl-carrier-protein] reductase [NADH] from Burkholderia ambifaria (strain ATCC BAA-244 / DSM 16087 / CCUG 44356 / LMG 19182 / AMMD) (Burkholderia cepacia (strain AMMD)).